A 65-amino-acid polypeptide reads, in one-letter code: Small ribosomal subunit protein bS21 (65 aa).

The protein belongs to the bacterial ribosomal protein bS21 family.

In Thermodesulfovibrio yellowstonii (strain ATCC 51303 / DSM 11347 / YP87), this protein is Small ribosomal subunit protein bS21.